A 385-amino-acid chain; its full sequence is 5'-AMP-activated protein kinase catalytic subunit alpha-1 (385 aa).

The 229-residue stretch at 1–229 folds into the Protein kinase domain; that stretch reads DGRVKIGHYI…IKDIREHEWF (229 aa). A Phosphothreonine modification is found at threonine 14. Residue 15 to 22 coordinates ATP; the sequence is LGVGTFGK. The active-site Proton acceptor is aspartate 100. At threonine 133 the chain carries Phosphothreonine; by LKB1 and CaMKK2. A phosphothreonine mark is found at threonine 219 and threonine 276. An AIS region spans residues 252 to 297; that stretch reads EALKQDPLAVAYHLIIDNRDFYLATSPPDSFLDDHHLTRVPFLVAE. Position 277 is a phosphoserine (serine 277). At serine 281 the chain carries Phosphoserine; by ULK1. Residue threonine 289 is modified to Phosphothreonine; by ULK1. Threonine 298 carries the post-translational modification Phosphothreonine. Phosphoserine occurs at positions 353 and 383.

It belongs to the protein kinase superfamily. CAMK Ser/Thr protein kinase family. SNF1 subfamily. As to quaternary structure, AMPK is a heterotrimer of an alpha catalytic subunit (PRKAA1 or PRKAA2), a beta (PRKAB1 or PRKAB2) and a gamma non-catalytic subunits (PRKAG1, PRKAG2 or PRKAG3). Interacts with FNIP1 and FNIP2. Mg(2+) serves as cofactor. Post-translationally, ubiquitinated. Phosphorylated at Thr-133 by STK11/LKB1 in complex with STE20-related adapter-alpha (STRADA) pseudo kinase and CAB39. Also phosphorylated at Thr-133 by CAMKK2; triggered by a rise in intracellular calcium ions, without detectable changes in the AMP/ATP ratio. CAMKK1 can also phosphorylate Thr-133, but at a much lower level. Dephosphorylated by protein phosphatase 2A and 2C (PP2A and PP2C). Phosphorylated by ULK1 and ULK2; leading to negatively regulate AMPK activity and suggesting the existence of a regulatory feedback loop between ULK1, ULK2 and AMPK. Dephosphorylated by PPM1A and PPM1B. In terms of processing, glycosylated; O-GlcNAcylated by OGT, promoting the AMP-activated protein kinase (AMPK) activity.

It is found in the cytoplasm. Its subcellular location is the nucleus. It catalyses the reaction L-seryl-[protein] + ATP = O-phospho-L-seryl-[protein] + ADP + H(+). It carries out the reaction L-threonyl-[protein] + ATP = O-phospho-L-threonyl-[protein] + ADP + H(+). The catalysed reaction is L-seryl-[acetyl-CoA carboxylase] + ATP = O-phospho-L-seryl-[acetyl-CoA carboxylase] + ADP + H(+). The enzyme catalyses L-seryl-[3-hydroxy-3-methylglutaryl-coenzyme A reductase] + ATP = O-phospho-L-seryl-[3-hydroxy-3-methylglutaryl-coenzyme A reductase] + ADP + H(+). It catalyses the reaction L-seryl-[tau protein] + ATP = O-phospho-L-seryl-[tau protein] + ADP + H(+). It carries out the reaction L-threonyl-[tau protein] + ATP = O-phospho-L-threonyl-[tau protein] + ADP + H(+). With respect to regulation, activated by phosphorylation on Thr-133. Binding of AMP to non-catalytic gamma subunit (PRKAG1, PRKAG2 or PRKAG3) results in allosteric activation, inducing phosphorylation on Thr-133. AMP-binding to gamma subunit also sustains activity by preventing dephosphorylation of Thr-133. ADP also stimulates Thr-133 phosphorylation, without stimulating already phosphorylated AMPK. ATP promotes dephosphorylation of Thr-133, rendering the enzyme inactive. Under physiological conditions AMPK mainly exists in its inactive form in complex with ATP, which is much more abundant than AMP. Selectively inhibited by compound C (6-[4-(2-Piperidin-1-yl-ethoxy)-phenyl)]-3-pyridin-4-yl-pyyrazolo[1,5-a] pyrimidine. Activated by resveratrol, a natural polyphenol present in red wine, and S17834, a synthetic polyphenol. In terms of biological role, catalytic subunit of AMP-activated protein kinase (AMPK), an energy sensor protein kinase that plays a key role in regulating cellular energy metabolism. In response to reduction of intracellular ATP levels, AMPK activates energy-producing pathways and inhibits energy-consuming processes: inhibits protein, carbohydrate and lipid biosynthesis, as well as cell growth and proliferation. AMPK acts via direct phosphorylation of metabolic enzymes, and by longer-term effects via phosphorylation of transcription regulators. Regulates lipid synthesis by phosphorylating and inactivating lipid metabolic enzymes such as ACACA, ACACB, GYS1, HMGCR and LIPE; regulates fatty acid and cholesterol synthesis by phosphorylating acetyl-CoA carboxylase (ACACA and ACACB) and hormone-sensitive lipase (LIPE) enzymes, respectively. Promotes lipolysis of lipid droplets by mediating phosphorylation of isoform 1 of CHKA (CHKalpha2). Regulates insulin-signaling and glycolysis by phosphorylating IRS1, PFKFB2 and PFKFB3. AMPK stimulates glucose uptake in muscle by increasing the translocation of the glucose transporter SLC2A4/GLUT4 to the plasma membrane, possibly by mediating phosphorylation of TBC1D4/AS160. Regulates transcription and chromatin structure by phosphorylating transcription regulators involved in energy metabolism such as CRTC2/TORC2, FOXO3, histone H2B, HDAC5, MEF2C, MLXIPL/ChREBP, EP300, HNF4A, p53/TP53, SREBF1, SREBF2 and PPARGC1A. Acts as a key regulator of glucose homeostasis in liver by phosphorylating CRTC2/TORC2, leading to CRTC2/TORC2 sequestration in the cytoplasm. In response to stress, phosphorylates 'Ser-36' of histone H2B (H2BS36ph), leading to promote transcription. Acts as a key regulator of cell growth and proliferation by phosphorylating FNIP1, TSC2, RPTOR, WDR24 and ATG1/ULK1: in response to nutrient limitation, negatively regulates the mTORC1 complex by phosphorylating RPTOR component of the mTORC1 complex and by phosphorylating and activating TSC2. Also phosphorylates and inhibits GATOR2 subunit WDR24 in response to nutrient limitation, leading to suppress glucose-mediated mTORC1 activation. In response to energetic stress, phosphorylates FNIP1, inactivating the non-canonical mTORC1 signaling, thereby promoting nuclear translocation of TFEB and TFE3, and inducing transcription of lysosomal or autophagy genes. In response to nutrient limitation, promotes autophagy by phosphorylating and activating ATG1/ULK1. In that process also activates WDR45/WIPI4. Phosphorylates CASP6, thereby preventing its autoprocessing and subsequent activation. In response to nutrient limitation, phosphorylates transcription factor FOXO3 promoting FOXO3 mitochondrial import. Also acts as a regulator of cellular polarity by remodeling the actin cytoskeleton; probably by indirectly activating myosin. AMPK also acts as a regulator of circadian rhythm by mediating phosphorylation of CRY1, leading to destabilize it. May regulate the Wnt signaling pathway by phosphorylating CTNNB1, leading to stabilize it. Also has tau-protein kinase activity: in response to amyloid beta A4 protein (APP) exposure, activated by CAMKK2, leading to phosphorylation of MAPT/TAU; however the relevance of such data remains unclear in vivo. Also phosphorylates CFTR, EEF2K, KLC1, NOS3 and SLC12A1. Regulates hepatic lipogenesis. Activated via SIRT3, represses sterol regulatory element-binding protein (SREBP) transcriptional activities and ATP-consuming lipogenesis to restore cellular energy balance. Upon stress, regulates mitochondrial fragmentation through phosphorylation of MTFR1L. The polypeptide is 5'-AMP-activated protein kinase catalytic subunit alpha-1 (PRKAA1) (Sus scrofa (Pig)).